Reading from the N-terminus, the 758-residue chain is MTPKESGKPISCAMKKLKGKRSKILVLSRDAGTNELKPTKGRAHRACIACRKRKVRCSGNIPCRLCQTNSYECKYDRPPRNSSVFDREVSDDSSLYAQRASHEREDSKGPISSIDYKKVVETIFPPETLRQILASSSFNSQNFLDTIKTCLLQGQLNVNQVIRQSLPKDTPWHMQTSVPLPPREIALKFIQKTWDCACVLFRFYHRPTIISILDSIYEAEKHGKQYTPEQVKTQPLIYSVLAVGALFSKEDLSKDSKATREFYTDEGYRYFLEAKNSLDFSNITDIYSIQAIFMMTIFLQCSANLKACYSFIGIALRAALKEGLHRRSSIVGPTPIQDETKKRLFWSVYKLDLYMNCILGFPSGIDESDIDQEFPLDVDDENISTIGIKFQDWRTISSCGMNNKHTKLILIMSRIYKLMYSLRRKPLEEDSRTQIVSLNDQLDNWYAQLPDILKVDTIRYRQTQPPLTVSANDTSSPYTKPKKLLYLDFLLSKIVLYKPFYHYISIDPLDIPEFQFQIHMAENCIEVAKKVIQLSYEMITQNLLSGSYWFSIHTIFFSVACLKFYVYQTEKGLIRNGKVDSDIHNATQLGSEILSLLKGASNASKRTFEVLNQLFKEFNEKTSVLSEQLLNIVKLQRQESSGALVPQLQTNNNFTKCQGELHHGQQHHQTPATSLRSILNLPQGEADLKFQNTNNESHTTTAAQEEYLDKLLAEFEEFDYSINRVLPDVIDFSALIGQDSSANNQIFSSEFSSDPTVN.

Residues 47–73 (CIACRKRKVRCSGNIPCRLCQTNSYEC) constitute a DNA-binding region (zn(2)-C6 fungal-type).

Belongs to the ASG1 family.

The protein localises to the nucleus. In Saccharomyces cerevisiae (strain ATCC 204508 / S288c) (Baker's yeast), this protein is Putative transcriptional regulatory protein YJL206C.